The primary structure comprises 565 residues: Urocanate hydratase (565 aa).

NAD(+) contacts are provided by residues glycine 61–glycine 62, glutamine 139, glycine 185–glycine 187, glutamate 205, arginine 210, asparagine 251–alanine 252, glutamine 272–histidine 276, tyrosine 282–leucine 283, and tyrosine 331. Cysteine 419 is a catalytic residue. Residues leucine 453–serine 472 form a disordered region. Basic and acidic residues predominate over residues arginine 463 to serine 472. An NAD(+)-binding site is contributed by glycine 501.

Belongs to the urocanase family. NAD(+) is required as a cofactor.

It is found in the cytoplasm. It catalyses the reaction 4-imidazolone-5-propanoate = trans-urocanate + H2O. The protein operates within amino-acid degradation; L-histidine degradation into L-glutamate; N-formimidoyl-L-glutamate from L-histidine: step 2/3. Its function is as follows. Catalyzes the conversion of urocanate to 4-imidazolone-5-propionate. The polypeptide is Urocanate hydratase (Pseudomonas syringae pv. syringae (strain B728a)).